The following is a 174-amino-acid chain: MSGNRDSILPPLEWLSAQHPPAPAAVSDWLMEPGSMTRRFERHCGRVHVEPQRECFVTRDQLGEEAEHLPDSPRYWLREVVLLGDNQPWLLGRTVIPLETLTGPDLALVDLGTLPLGRYLFSSDELTRDYIHIGRQDALWARRSRLRLAGKPLLLTELFLPASPLYATGSSVPE.

Substrate-binding residues include Met-36, Arg-78, Leu-116, and Glu-157.

It belongs to the UbiC family. In terms of assembly, monomer.

It is found in the cytoplasm. The enzyme catalyses chorismate = 4-hydroxybenzoate + pyruvate. The protein operates within cofactor biosynthesis; ubiquinone biosynthesis. Functionally, removes the pyruvyl group from chorismate, with concomitant aromatization of the ring, to provide 4-hydroxybenzoate (4HB) for the ubiquinone pathway. The chain is Chorismate pyruvate-lyase from Serratia proteamaculans (strain 568).